A 406-amino-acid chain; its full sequence is Arginine deiminase (406 aa).

Cys396 (amidino-cysteine intermediate) is an active-site residue.

The protein belongs to the arginine deiminase family.

The protein localises to the cytoplasm. The enzyme catalyses L-arginine + H2O = L-citrulline + NH4(+). Its pathway is amino-acid degradation; L-arginine degradation via ADI pathway; carbamoyl phosphate from L-arginine: step 1/2. The protein is Arginine deiminase of Salmonella typhimurium (strain LT2 / SGSC1412 / ATCC 700720).